We begin with the raw amino-acid sequence, 302 residues long: 4-hydroxy-tetrahydrodipicolinate synthase (302 aa).

A pyruvate-binding site is contributed by T55. Y144 (proton donor/acceptor) is an active-site residue. Catalysis depends on K172, which acts as the Schiff-base intermediate with substrate. Pyruvate is bound at residue V214.

Belongs to the DapA family. As to quaternary structure, homotetramer; dimer of dimers.

It is found in the cytoplasm. It catalyses the reaction L-aspartate 4-semialdehyde + pyruvate = (2S,4S)-4-hydroxy-2,3,4,5-tetrahydrodipicolinate + H2O + H(+). The protein operates within amino-acid biosynthesis; L-lysine biosynthesis via DAP pathway; (S)-tetrahydrodipicolinate from L-aspartate: step 3/4. Its function is as follows. Catalyzes the condensation of (S)-aspartate-beta-semialdehyde [(S)-ASA] and pyruvate to 4-hydroxy-tetrahydrodipicolinate (HTPA). This chain is 4-hydroxy-tetrahydrodipicolinate synthase, found in Synechococcus sp. (strain CC9902).